A 1138-amino-acid polypeptide reads, in one-letter code: Eukaryotic translation initiation factor 3 subunit A (1138 aa).

One can recognise a PCI domain in the interval Leu-319–Thr-502. Disordered regions lie at residues Asn-590 to Gln-633 and Glu-817 to Arg-1138. 4 stretches are compositionally biased toward basic and acidic residues: residues Glu-817–Arg-903, Asp-923–Asp-967, Gly-1003–Gln-1049, and Asp-1058–Arg-1078. Positions Pro-1082–Asn-1100 are enriched in gly residues. Positions Pro-1107 to Asp-1128 are enriched in basic and acidic residues.

The protein belongs to the eIF-3 subunit A family. Component of the eukaryotic translation initiation factor 3 (eIF-3) complex. The eIF-3 complex interacts with pix.

The protein resides in the cytoplasm. Its function is as follows. RNA-binding component of the eukaryotic translation initiation factor 3 (eIF-3) complex, which is involved in protein synthesis of a specialized repertoire of mRNAs and, together with other initiation factors, stimulates binding of mRNA and methionyl-tRNAi to the 40S ribosome. The eIF-3 complex specifically targets and initiates translation of a subset of mRNAs involved in cell proliferation. This Drosophila virilis (Fruit fly) protein is Eukaryotic translation initiation factor 3 subunit A.